The following is a 633-amino-acid chain: Beta-myrcene synthase TPS15CT (633 aa).

The N-terminal 55 residues, 1-55 (MHCMAVHQFSPSIVSSLPTISTYNNNHFCRFFTPKTSISPISKTKSKSSTCYPIQ), are a transit peptide targeting the chloroplast. (2E)-geranyl diphosphate is bound by residues R344, D381, D385, R525, and D528. Mg(2+)-binding residues include D381 and D385. The DDXXD motif signature appears at 381–385 (DDIYD). Mg(2+)-binding residues include D528, T532, and E536.

This sequence belongs to the terpene synthase family. Tpsb subfamily. Mg(2+) serves as cofactor. It depends on Mn(2+) as a cofactor.

The protein resides in the plastid. Its subcellular location is the chloroplast. It carries out the reaction (2E)-geranyl diphosphate = beta-myrcene + diphosphate. Its pathway is secondary metabolite biosynthesis; terpenoid biosynthesis. Functionally, involved in monoterpene (C10) olefins biosynthesis, constituants of cannabinoids and terpenoids-rich resins. Catalyzes strictly the conversion of (2E)-geranyl diphosphate to beta-myrcene. The sequence is that of Beta-myrcene synthase TPS15CT from Cannabis sativa (Hemp).